The primary structure comprises 327 residues: COP9 signalosome complex subunit 6 (327 aa).

One can recognise an MPN domain in the interval 41 to 174 (VALHPLVILN…VSVFESVIDI (134 aa)). Residues 211 to 327 (SGENSTVAEH…IGRRMRGLFF (117 aa)) form an interaction with Vpr region.

It belongs to the peptidase M67A family. CSN6 subfamily. Component of the CSN complex, composed of COPS1/GPS1, COPS2, COPS3, COPS4, COPS5, COPS6, COPS7 (COPS7A or COPS7B), COPS8 and COPS9 isoform 1. In the complex, it probably interacts directly with COPS2, COPS4, COPS5, COPS7 (COPS7A or COPS7B) and COPS9 isoform 1. Interacts with the translation initiation factor EIF3S6. Interacts weakly with RBX1. Directly interacts with COP1 and 14-3-3 protein sigma/SFN. Interacts with ERCC6. In terms of assembly, (Microbial infection) Interacts with the HIV-1 protein Vpr. In terms of tissue distribution, widely expressed.

Its subcellular location is the nucleus. It localises to the cytoplasm. The protein resides in the perinuclear region. Its function is as follows. Component of the COP9 signalosome complex (CSN), a complex involved in various cellular and developmental processes. The CSN complex is an essential regulator of the ubiquitin (Ubl) conjugation pathway by mediating the deneddylation of the cullin subunits of SCF-type E3 ligase complexes, leading to decrease the Ubl ligase activity of SCF-type complexes such as SCF, CSA or DDB2. The complex is also involved in phosphorylation of p53/TP53, c-jun/JUN, IkappaBalpha/NFKBIA, ITPK1 and IRF8, possibly via its association with CK2 and PKD kinases. CSN-dependent phosphorylation of TP53 and JUN promotes and protects degradation by the Ubl system, respectively. Has some glucocorticoid receptor-responsive activity. Stabilizes COP1 through reducing COP1 auto-ubiquitination and decelerating COP1 turnover rate, hence regulates the ubiquitination of COP1 targets. In Homo sapiens (Human), this protein is COP9 signalosome complex subunit 6 (COPS6).